Reading from the N-terminus, the 429-residue chain is Serine--tRNA ligase (429 aa).

L-serine is bound at residue 236-238; sequence TAE. 267–269 is a binding site for ATP; it reads RSE. Glu290 is a binding site for L-serine. 354-357 is a binding site for ATP; that stretch reads EISS. Ser390 provides a ligand contact to L-serine.

It belongs to the class-II aminoacyl-tRNA synthetase family. Type-1 seryl-tRNA synthetase subfamily. Homodimer. The tRNA molecule binds across the dimer.

It localises to the cytoplasm. The catalysed reaction is tRNA(Ser) + L-serine + ATP = L-seryl-tRNA(Ser) + AMP + diphosphate + H(+). The enzyme catalyses tRNA(Sec) + L-serine + ATP = L-seryl-tRNA(Sec) + AMP + diphosphate + H(+). It participates in aminoacyl-tRNA biosynthesis; selenocysteinyl-tRNA(Sec) biosynthesis; L-seryl-tRNA(Sec) from L-serine and tRNA(Sec): step 1/1. Its function is as follows. Catalyzes the attachment of serine to tRNA(Ser). Is also able to aminoacylate tRNA(Sec) with serine, to form the misacylated tRNA L-seryl-tRNA(Sec), which will be further converted into selenocysteinyl-tRNA(Sec). The chain is Serine--tRNA ligase from Photorhabdus laumondii subsp. laumondii (strain DSM 15139 / CIP 105565 / TT01) (Photorhabdus luminescens subsp. laumondii).